The following is a 481-amino-acid chain: Glutamyl-tRNA(Gln) amidotransferase subunit A (481 aa).

Active-site charge relay system residues include lysine 74 and serine 149. The active-site Acyl-ester intermediate is the serine 173.

This sequence belongs to the amidase family. GatA subfamily. In terms of assembly, heterotrimer of A, B and C subunits.

The catalysed reaction is L-glutamyl-tRNA(Gln) + L-glutamine + ATP + H2O = L-glutaminyl-tRNA(Gln) + L-glutamate + ADP + phosphate + H(+). In terms of biological role, allows the formation of correctly charged Gln-tRNA(Gln) through the transamidation of misacylated Glu-tRNA(Gln) in organisms which lack glutaminyl-tRNA synthetase. The reaction takes place in the presence of glutamine and ATP through an activated gamma-phospho-Glu-tRNA(Gln). This chain is Glutamyl-tRNA(Gln) amidotransferase subunit A, found in Francisella tularensis subsp. tularensis (strain WY96-3418).